A 441-amino-acid chain; its full sequence is Ribulose bisphosphate carboxylase large chain (441 aa).

Lys-5 carries the post-translational modification N6,N6,N6-trimethyllysine. The substrate site is built by Asn-114 and Thr-164. Lys-166 acts as the Proton acceptor in catalysis. Lys-168 provides a ligand contact to substrate. The Mg(2+) site is built by Lys-192, Asp-194, and Glu-195. Residue Lys-192 is modified to N6-carboxylysine. The active-site Proton acceptor is His-285. Residues Arg-286, His-318, and Ser-370 each coordinate substrate.

It belongs to the RuBisCO large chain family. Type I subfamily. Heterohexadecamer of 8 large chains and 8 small chains; disulfide-linked. The disulfide link is formed within the large subunit homodimers. Mg(2+) is required as a cofactor. Post-translationally, the disulfide bond which can form in the large chain dimeric partners within the hexadecamer appears to be associated with oxidative stress and protein turnover.

Its subcellular location is the plastid. It localises to the chloroplast. The enzyme catalyses 2 (2R)-3-phosphoglycerate + 2 H(+) = D-ribulose 1,5-bisphosphate + CO2 + H2O. The catalysed reaction is D-ribulose 1,5-bisphosphate + O2 = 2-phosphoglycolate + (2R)-3-phosphoglycerate + 2 H(+). In terms of biological role, ruBisCO catalyzes two reactions: the carboxylation of D-ribulose 1,5-bisphosphate, the primary event in carbon dioxide fixation, as well as the oxidative fragmentation of the pentose substrate in the photorespiration process. Both reactions occur simultaneously and in competition at the same active site. In Drosera petiolaris (Woolly sundew), this protein is Ribulose bisphosphate carboxylase large chain.